The chain runs to 382 residues: MSQSNNVTDLARANIRALTPYMSARRLGGNGDVWLNANEYPLGTEYQLTTQTFNRYPECQPKHVIERYAAYAGLPPEQVLVSRGADEGIELLIRAFCEPGQDAILFCPPTYGMYAVSAETFGVERRTVPAQADWQLDLPAIANNLEQVKVIYVCSPNNPTGNLINPADLQAVLALAQGRAIVAIDEAYIEFCPQASVSNWLKDYPNLVILRTLSKAFALAGLRCGFTLANSDIIQLLLKVIAPYPLSTPVADIAAQALSPKGIEQMRQRVSEVRANRAWLQSALQDCACVEQVFTSESNYLLVRFTASSSVFKVLWDQGIILRDQNKQPGLANCLRITIGTRQECERVIAALAPLAGIDNSNNIDNQSKTHSQTSSIRKGTI.

Lys215 is subject to N6-(pyridoxal phosphate)lysine. The segment at 363 to 382 (NIDNQSKTHSQTSSIRKGTI) is disordered.

Belongs to the class-II pyridoxal-phosphate-dependent aminotransferase family. Histidinol-phosphate aminotransferase subfamily. Homodimer. Pyridoxal 5'-phosphate is required as a cofactor.

It carries out the reaction L-histidinol phosphate + 2-oxoglutarate = 3-(imidazol-4-yl)-2-oxopropyl phosphate + L-glutamate. It participates in amino-acid biosynthesis; L-histidine biosynthesis; L-histidine from 5-phospho-alpha-D-ribose 1-diphosphate: step 7/9. This is Histidinol-phosphate aminotransferase from Yersinia pseudotuberculosis serotype O:3 (strain YPIII).